We begin with the raw amino-acid sequence, 122 residues long: Small ribosomal subunit protein uS13 (122 aa).

A disordered region spans residues 95–122 (GLPVRGQRTHTNARTRKGPAKSIAGKKK).

It belongs to the universal ribosomal protein uS13 family. In terms of assembly, part of the 30S ribosomal subunit. Forms a loose heterodimer with protein S19. Forms two bridges to the 50S subunit in the 70S ribosome.

Located at the top of the head of the 30S subunit, it contacts several helices of the 16S rRNA. In the 70S ribosome it contacts the 23S rRNA (bridge B1a) and protein L5 of the 50S subunit (bridge B1b), connecting the 2 subunits; these bridges are implicated in subunit movement. Contacts the tRNAs in the A and P-sites. This chain is Small ribosomal subunit protein uS13, found in Rhodopseudomonas palustris (strain BisB18).